Here is a 207-residue protein sequence, read N- to C-terminus: Nitrile hydratase subunit alpha (207 aa).

Fe(3+) is bound by residues Cys-110, Cys-113, Ser-114, and Cys-115. Cys-113 carries the cysteine sulfinic acid (-SO2H) modification. The residue at position 115 (Cys-115) is a Cysteine sulfenic acid (-SOH).

The protein belongs to the nitrile hydratase subunit alpha family. Heterodimer of an alpha and a beta chain. Requires Fe(3+) as cofactor. In terms of processing, oxidation on Cys-113 is essential for the activity. Oxidation on Cys-115 stabilizes the Fe-NO ligand coordinated in the inactive form.

The catalysed reaction is an aliphatic primary amide = an aliphatic nitrile + H2O. With respect to regulation, inactivated by nitrosylation of the iron center in the dark and activated by photo-induced nitric oxide (NO) release. Inactivated by oxidation of Cys-115 to a sulfenic acid. Its function is as follows. NHase catalyzes the hydration of various nitrile compounds to the corresponding amides. Industrial production of acrylamide is now being developed using some of the enzymes of this class. In Rhodococcus erythropolis (Arthrobacter picolinophilus), this protein is Nitrile hydratase subunit alpha (nthA).